The chain runs to 364 residues: Histidinol-phosphate aminotransferase (364 aa).

Residues 1–46 are disordered; it reads MQPRDLSDHSPYVPGRGVEEVARDRGLDPDDLIKLSSNENPHGPSP. Basic and acidic residues predominate over residues 17–33; sequence GVEEVARDRGLDPDDLI. Lys222 bears the N6-(pyridoxal phosphate)lysine mark.

Belongs to the class-II pyridoxal-phosphate-dependent aminotransferase family. Histidinol-phosphate aminotransferase subfamily. Requires pyridoxal 5'-phosphate as cofactor.

The catalysed reaction is L-histidinol phosphate + 2-oxoglutarate = 3-(imidazol-4-yl)-2-oxopropyl phosphate + L-glutamate. It participates in amino-acid biosynthesis; L-histidine biosynthesis; L-histidine from 5-phospho-alpha-D-ribose 1-diphosphate: step 7/9. In Halorubrum lacusprofundi (strain ATCC 49239 / DSM 5036 / JCM 8891 / ACAM 34), this protein is Histidinol-phosphate aminotransferase.